The primary structure comprises 505 residues: Aspartyl/glutamyl-tRNA(Asn/Gln) amidotransferase subunit B (505 aa).

Belongs to the GatB/GatE family. GatB subfamily. In terms of assembly, heterotrimer of A, B and C subunits.

The enzyme catalyses L-glutamyl-tRNA(Gln) + L-glutamine + ATP + H2O = L-glutaminyl-tRNA(Gln) + L-glutamate + ADP + phosphate + H(+). It catalyses the reaction L-aspartyl-tRNA(Asn) + L-glutamine + ATP + H2O = L-asparaginyl-tRNA(Asn) + L-glutamate + ADP + phosphate + 2 H(+). Functionally, allows the formation of correctly charged Asn-tRNA(Asn) or Gln-tRNA(Gln) through the transamidation of misacylated Asp-tRNA(Asn) or Glu-tRNA(Gln) in organisms which lack either or both of asparaginyl-tRNA or glutaminyl-tRNA synthetases. The reaction takes place in the presence of glutamine and ATP through an activated phospho-Asp-tRNA(Asn) or phospho-Glu-tRNA(Gln). The protein is Aspartyl/glutamyl-tRNA(Asn/Gln) amidotransferase subunit B of Kineococcus radiotolerans (strain ATCC BAA-149 / DSM 14245 / SRS30216).